A 180-amino-acid polypeptide reads, in one-letter code: MGGVMSYFRGLFGAREMRILILGLDGAGKTTILYRLQVGEVVTTIPTIGFNVEQVEYKNLKFQVWDLGGQTSIRPYWRCYYANTDAIIYVVDSADRDRVGISRQELATMLQEDELQGAVLAVLANKQDIAGCLTETEVYKALGLDALRNRTIQIFKTSASKGEGLDPAMDWLANQLQQKK.

A lipid anchor (N-myristoyl glycine) is attached at Gly-2. GTP contacts are provided by residues 23-30, 66-70, and 125-128; these read GLDGAGKT, DLGGQ, and NKQD.

The protein belongs to the small GTPase superfamily. Arf family. In terms of tissue distribution, expressed in neuronal cells. Expression in hypodermal tissues is absent.

Its subcellular location is the golgi apparatus. The protein resides in the cytoplasm. It is found in the cytoplasmic granule. In terms of biological role, GTP-binding protein that may be involved in protein trafficking; may modulate vesicle budding and uncoating within the Golgi apparatus. Plays a role in male tail tip morphogenesis. This Caenorhabditis elegans protein is ADP-ribosylation factor-like protein 1.